The chain runs to 100 residues: MFAIIQTGGKQYRVQEGDVIRVENLKGEAGDKLDLTPLFVGGDQALFGDAVSNFVVNAEVVEHGRGPKIYIRKYKSGVQYRRRTGHRQDYTAIKILGIKG.

Belongs to the bacterial ribosomal protein bL21 family. As to quaternary structure, part of the 50S ribosomal subunit. Contacts protein L20.

This protein binds to 23S rRNA in the presence of protein L20. This Deinococcus deserti (strain DSM 17065 / CIP 109153 / LMG 22923 / VCD115) protein is Large ribosomal subunit protein bL21.